The chain runs to 206 residues: LexA repressor (206 aa).

A DNA-binding region (H-T-H motif) is located at residues 28–48 (VREIGQAVGLASSSTVHGHLS). Residues Ser128 and Lys166 each act as for autocatalytic cleavage activity in the active site.

The protein belongs to the peptidase S24 family. As to quaternary structure, homodimer.

The catalysed reaction is Hydrolysis of Ala-|-Gly bond in repressor LexA.. In terms of biological role, represses a number of genes involved in the response to DNA damage (SOS response), including recA and lexA. In the presence of single-stranded DNA, RecA interacts with LexA causing an autocatalytic cleavage which disrupts the DNA-binding part of LexA, leading to derepression of the SOS regulon and eventually DNA repair. This Bacillus cytotoxicus (strain DSM 22905 / CIP 110041 / 391-98 / NVH 391-98) protein is LexA repressor.